The sequence spans 159 residues: Ribonuclease H (159 aa).

Positions 4-145 (THKQVNIYTD…CDKLARDAAE (142 aa)) constitute an RNase H type-1 domain. Positions 13, 51, 73, and 137 each coordinate Mg(2+).

The protein belongs to the RNase H family. As to quaternary structure, monomer. The cofactor is Mg(2+).

It is found in the cytoplasm. It carries out the reaction Endonucleolytic cleavage to 5'-phosphomonoester.. Endonuclease that specifically degrades the RNA of RNA-DNA hybrids. The chain is Ribonuclease H from Shewanella denitrificans (strain OS217 / ATCC BAA-1090 / DSM 15013).